Consider the following 424-residue polypeptide: Virion nicking-joining enzyme (424 aa).

Belongs to the orthopoxvirus OPG042 family.

Its subcellular location is the virion. Functionally, DNA nicking enzyme that cleaves extruded cruciform DNA at its tip. Probably nicks viral hairpins. In Cynomys gunnisoni (Gunnison's prairie dog), this protein is Virion nicking-joining enzyme (OPG042).